Reading from the N-terminus, the 185-residue chain is Signal peptidase I P (185 aa).

The Cytoplasmic portion of the chain corresponds to 1 to 14 (MFDKEKRKKSNIID). The helical transmembrane segment at 15–34 (WIKAILIALILVFLVRTFLF) threads the bilayer. At 35–185 (EPYIVQGESM…FPLDRIRHAK (151 aa)) the chain is on the extracellular side. Residues Ser43 and Lys85 contribute to the active site.

This sequence belongs to the peptidase S26 family.

It localises to the cell membrane. It carries out the reaction Cleavage of hydrophobic, N-terminal signal or leader sequences from secreted and periplasmic proteins.. This Bacillus subtilis subsp. natto protein is Signal peptidase I P (sipP).